Reading from the N-terminus, the 285-residue chain is Pantothenate synthetase (285 aa).

ATP is bound at residue 30-37; sequence MGFLHEGH. Residue His37 is the Proton donor of the active site. Position 61 (Gln61) interacts with (R)-pantoate. Gln61 is a beta-alanine binding site. 147-150 contributes to the ATP binding site; the sequence is GQKD. Position 153 (Gln153) interacts with (R)-pantoate. ATP-binding positions include Val176 and 184–187; that span reads KSSR.

Belongs to the pantothenate synthetase family. In terms of assembly, homodimer.

The protein localises to the cytoplasm. The catalysed reaction is (R)-pantoate + beta-alanine + ATP = (R)-pantothenate + AMP + diphosphate + H(+). It participates in cofactor biosynthesis; (R)-pantothenate biosynthesis; (R)-pantothenate from (R)-pantoate and beta-alanine: step 1/1. Its function is as follows. Catalyzes the condensation of pantoate with beta-alanine in an ATP-dependent reaction via a pantoyl-adenylate intermediate. This is Pantothenate synthetase from Listeria monocytogenes serotype 4b (strain F2365).